The primary structure comprises 430 residues: tRNA(Ile)-lysidine synthase (430 aa).

Residue S21–S26 participates in ATP binding.

The protein belongs to the tRNA(Ile)-lysidine synthase family.

The protein resides in the cytoplasm. The enzyme catalyses cytidine(34) in tRNA(Ile2) + L-lysine + ATP = lysidine(34) in tRNA(Ile2) + AMP + diphosphate + H(+). Functionally, ligates lysine onto the cytidine present at position 34 of the AUA codon-specific tRNA(Ile) that contains the anticodon CAU, in an ATP-dependent manner. Cytidine is converted to lysidine, thus changing the amino acid specificity of the tRNA from methionine to isoleucine. This chain is tRNA(Ile)-lysidine synthase, found in Salmonella typhi.